The sequence spans 1058 residues: Kinesin-like protein KIN-7M, chloroplastic (1058 aa).

A chloroplast-targeting transit peptide spans 1–60 (MASSSSRTRSRSPFSHRRPPSPYSSASSTSSSLINNRLLPRSSSTPTSTVYNSGGVTGSR). Positions 1-92 (MASSSSRTRS…QSYPSEGLIG (92 aa)) are disordered. The span at 8-19 (TRSRSPFSHRRP) shows a compositional bias: basic residues. The span at 23 to 49 (YSSASSTSSSLINNRLLPRSSSTPTST) shows a compositional bias: low complexity. The span at 50 to 70 (VYNSGGVTGSRSMSITRTISD) shows a compositional bias: polar residues. In terms of domain architecture, Kinesin motor spans 104–421 (SISVTVRFRP…LKFASRAKRI (318 aa)). Residue 184-191 (GVTSSGKT) participates in ATP binding. A coiled-coil region spans residues 422–509 (EINASRNKII…QKLTKLILVS (88 aa)). The segment at 549–578 (PSSTLSLASDARRSSSKFKDENSPVGSRAE) is disordered. The segment covering 558–570 (DARRSSSKFKDEN) has biased composition (basic and acidic residues). Coiled-coil stretches lie at residues 621–658 (PENS…ASIA), 704–826 (NNEL…AQKR), 873–904 (LEAA…LEND), and 935–999 (KEDE…SQAA). Positions 824 to 838 (QKRNNNSMNSAANRN) are enriched in low complexity. Positions 824–847 (QKRNNNSMNSAANRNGTRPGRKAR) are disordered. The disordered stretch occupies residues 922–946 (ALSIQKSDEAEPAKEDEVTELDNKN). Residues 927 to 946 (KSDEAEPAKEDEVTELDNKN) are compositionally biased toward basic and acidic residues. The segment at 1011-1046 (CKVCFESPTATILLPCRHFCLCKSCSLACSECPICR) adopts an RING-type zinc-finger fold.

It belongs to the TRAFAC class myosin-kinesin ATPase superfamily. Kinesin family. KIN-7 subfamily.

It is found in the plastid. It localises to the chloroplast. The protein is Kinesin-like protein KIN-7M, chloroplastic of Arabidopsis thaliana (Mouse-ear cress).